Reading from the N-terminus, the 684-residue chain is Cleavage and polyadenylation specificity factor 73 (684 aa).

Zn(2+)-binding residues include His-77, His-79, Asp-81, His-82, His-164, and Asp-185. Catalysis depends on His-402, which acts as the Proton donor. His-424 serves as a coordination point for Zn(2+).

It belongs to the metallo-beta-lactamase superfamily. RNA-metabolizing metallo-beta-lactamase-like family. CPSF3 subfamily. As to quaternary structure, component of the cleavage and polyadenylation specificity factor (CPSF) complex, composed of at least Clp, Cpsf73, Cpsf100 and Cpsf160. Interacts with Sym and Cpsf100 forming a core cleavage factor required for both polyadenylated and histone mRNA processing. Interacts with Slbp and Lsm11. Zn(2+) is required as a cofactor.

It is found in the nucleus. Component of the cleavage and polyadenylation specificity factor (CPSF) complex that plays a key role in pre-mRNA 3'-end formation, recognizing the AAUAAA signal sequence and interacting with poly(A) polymerase and other factors to bring about cleavage and poly(A) addition. Has endonuclease activity and functions as an mRNA 3'-end-processing endonuclease. Required for the cotranscriptional processing of 3'-ends of polyadenylated and histone pre-mRNA. The polypeptide is Cleavage and polyadenylation specificity factor 73 (Cpsf73) (Drosophila melanogaster (Fruit fly)).